Consider the following 411-residue polypeptide: Putative competence-damage inducible protein (411 aa).

It belongs to the CinA family.

This chain is Putative competence-damage inducible protein, found in Desulforamulus reducens (strain ATCC BAA-1160 / DSM 100696 / MI-1) (Desulfotomaculum reducens).